The following is a 353-amino-acid chain: D-alanine--D-alanine ligase (353 aa).

The 209-residue stretch at 141 to 349 (KAAFAAAGLP…LPDLVAQLVH (209 aa)) folds into the ATP-grasp domain. Residue 176 to 231 (EAELGYPCFVKPANMGSSVGISKARHRDQLLAGLKEAARHDTRLVVEHGVSARELE) participates in ATP binding. The Mg(2+) site is built by aspartate 302, glutamate 316, and asparagine 318.

This sequence belongs to the D-alanine--D-alanine ligase family. Mg(2+) serves as cofactor. The cofactor is Mn(2+).

It localises to the cytoplasm. It catalyses the reaction 2 D-alanine + ATP = D-alanyl-D-alanine + ADP + phosphate + H(+). It participates in cell wall biogenesis; peptidoglycan biosynthesis. Its function is as follows. Cell wall formation. This is D-alanine--D-alanine ligase from Synechococcus sp. (strain CC9311).